The following is a 410-amino-acid chain: LanC-like protein GCR2 (410 aa).

Zn(2+)-binding residues include cysteine 283, cysteine 328, and histidine 329.

The protein belongs to the LanC-like protein family. In terms of assembly, may interact (via C-terminus) with GPA1.

May play a role in abscisic acid (ABA) signaling. The protein is LanC-like protein GCR2 (GCR2) of Arabidopsis thaliana (Mouse-ear cress).